The chain runs to 338 residues: Probable arabinan endo-1,5-alpha-L-arabinosidase A (338 aa).

The signal sequence occupies residues 1 to 20 (MRASFVVTAPLLAAAVHGYA). Asp-33 functions as the Proton acceptor in the catalytic mechanism. The active-site Proton donor is the Glu-217.

It belongs to the glycosyl hydrolase 43 family.

It localises to the secreted. It carries out the reaction Endohydrolysis of (1-&gt;5)-alpha-arabinofuranosidic linkages in (1-&gt;5)-arabinans.. Its pathway is glycan metabolism; L-arabinan degradation. Functionally, endo-1,5-alpha-L-arabinanase involved in degradation of pectin. Its preferred substrate is linear 1,5-alpha-L-arabinan. This Aspergillus terreus (strain NIH 2624 / FGSC A1156) protein is Probable arabinan endo-1,5-alpha-L-arabinosidase A (abnA).